The following is a 248-amino-acid chain: MILLGVNIDHCATLRQARYRQAEATAGGPIEPDPVTLALAAERAGADGITVHLREDRRHIQERDVWRLRESIATRLNFEMACTPAMTQLALKLKPESVCLVPENRQEITTEGGLDVTAQRDRVRACVEAMNAAGIQASLFIDPDEQQIELAAQLHAPCVELHTGAYASSYPQPTSRTKEFQRLRMGAARAHELGLIVNAGHGINYVNIAEVRTLPHLHELNIGHSIISRALFTGIDEAVREMKVRMNP.

3-amino-2-oxopropyl phosphate is bound at residue Asn7. 9–10 serves as a coordination point for 1-deoxy-D-xylulose 5-phosphate; that stretch reads DH. Arg18 contacts 3-amino-2-oxopropyl phosphate. His52 functions as the Proton acceptor in the catalytic mechanism. Residues Arg54 and His59 each contribute to the 1-deoxy-D-xylulose 5-phosphate site. The Proton acceptor role is filled by Glu79. Thr109 contributes to the 1-deoxy-D-xylulose 5-phosphate binding site. His201 serves as the catalytic Proton donor. Residues Gly202 and 223–224 contribute to the 3-amino-2-oxopropyl phosphate site; that span reads GH.

The protein belongs to the PNP synthase family. Homooctamer; tetramer of dimers.

It is found in the cytoplasm. It catalyses the reaction 3-amino-2-oxopropyl phosphate + 1-deoxy-D-xylulose 5-phosphate = pyridoxine 5'-phosphate + phosphate + 2 H2O + H(+). The protein operates within cofactor biosynthesis; pyridoxine 5'-phosphate biosynthesis; pyridoxine 5'-phosphate from D-erythrose 4-phosphate: step 5/5. Its function is as follows. Catalyzes the complicated ring closure reaction between the two acyclic compounds 1-deoxy-D-xylulose-5-phosphate (DXP) and 3-amino-2-oxopropyl phosphate (1-amino-acetone-3-phosphate or AAP) to form pyridoxine 5'-phosphate (PNP) and inorganic phosphate. The polypeptide is Pyridoxine 5'-phosphate synthase (Opitutus terrae (strain DSM 11246 / JCM 15787 / PB90-1)).